The chain runs to 151 residues: Ribosome maturation factor RimP (151 aa).

Belongs to the RimP family.

Its subcellular location is the cytoplasm. Functionally, required for maturation of 30S ribosomal subunits. The polypeptide is Ribosome maturation factor RimP (Shewanella woodyi (strain ATCC 51908 / MS32)).